The chain runs to 168 residues: Cysteine-rich perinuclear theca protein 1 (168 aa).

Residues 144–168 are disordered; sequence NVSDPEEVPPCLDSDPFPNGDLASS.

Specifically expressed in spermatozoa (at protein level). Detected from the elongated spermatid stage onwards; not found in immature germ cells or somatic cells (at protein level).

It localises to the cytoplasm. The protein resides in the cytoskeleton. It is found in the perinuclear theca. The chain is Cysteine-rich perinuclear theca protein 1 from Mus musculus (Mouse).